Consider the following 337-residue polypeptide: MLFISRSLLPILYFQLFKKMSPFRLLSLPTLALKNVLLHIDFIDLLELSLASKKCEIYMKTCCLKIDSLHFHFRRIQLNSKSKSLEFDFNSVVDISACSRKVKGSRYDAWTKNYDESRIICIPTNFDEDIIAVFQHFWDLFQIKNLHYDVVGFTGVFLNNTMARLPSKLKSLEFGDYLSGNQDNIDTILNYYDISDNLKVFDEVSKIHEKMKKVNNLSLICLPSIPIEELIQLDCETIKLYWKENSAINAVRSLISNWKGNKTRLEHLEILASEDWNFDLVLEGMNAKPWNPRRRPSNYQKEDLNIDCTSYMDIEGDCQIASIGIRENRYLDFIVWF.

One can recognise an F-box domain in the interval 22–76 (PFRLLSLPTLALKNVLLHIDFIDLLELSLASKKCEIYMKTCCLKIDSLHFHFRRI).

This is an uncharacterized protein from Caenorhabditis elegans.